The chain runs to 420 residues: Glutamate-1-semialdehyde 2,1-aminomutase (420 aa).

Lysine 261 bears the N6-(pyridoxal phosphate)lysine mark.

This sequence belongs to the class-III pyridoxal-phosphate-dependent aminotransferase family. HemL subfamily. Requires pyridoxal 5'-phosphate as cofactor.

It is found in the cytoplasm. It carries out the reaction (S)-4-amino-5-oxopentanoate = 5-aminolevulinate. Its pathway is porphyrin-containing compound metabolism; protoporphyrin-IX biosynthesis; 5-aminolevulinate from L-glutamyl-tRNA(Glu): step 2/2. The chain is Glutamate-1-semialdehyde 2,1-aminomutase from Thermoplasma volcanium (strain ATCC 51530 / DSM 4299 / JCM 9571 / NBRC 15438 / GSS1).